A 94-amino-acid chain; its full sequence is Putative pterin-4-alpha-carbinolamine dehydratase (94 aa).

It belongs to the pterin-4-alpha-carbinolamine dehydratase family.

It carries out the reaction (4aS,6R)-4a-hydroxy-L-erythro-5,6,7,8-tetrahydrobiopterin = (6R)-L-erythro-6,7-dihydrobiopterin + H2O. The chain is Putative pterin-4-alpha-carbinolamine dehydratase from Mycobacterium sp. (strain JLS).